The sequence spans 81 residues: Photosystem I iron-sulfur center (81 aa).

2 4Fe-4S ferredoxin-type domains span residues 2–31 (SHIVKIYDTCIGCTQCVRACPLDVLEMVPW) and 39–68 (MASAPRTEDCVGCKRCESACPTDFLSVRVY). Residues cysteine 11, cysteine 14, cysteine 17, cysteine 21, cysteine 48, cysteine 51, cysteine 54, and cysteine 58 each contribute to the [4Fe-4S] cluster site.

The eukaryotic PSI reaction center is composed of at least 11 subunits. [4Fe-4S] cluster serves as cofactor.

It localises to the plastid. The protein resides in the chloroplast thylakoid membrane. The enzyme catalyses reduced [plastocyanin] + hnu + oxidized [2Fe-2S]-[ferredoxin] = oxidized [plastocyanin] + reduced [2Fe-2S]-[ferredoxin]. Its function is as follows. Apoprotein for the two 4Fe-4S centers FA and FB of photosystem I (PSI); essential for photochemical activity. FB is the terminal electron acceptor of PSI, donating electrons to ferredoxin. The C-terminus interacts with PsaA/B/D and helps assemble the protein into the PSI complex. Required for binding of PsaD and PsaE to PSI. PSI is a plastocyanin/cytochrome c6-ferredoxin oxidoreductase, converting photonic excitation into a charge separation, which transfers an electron from the donor P700 chlorophyll pair to the spectroscopically characterized acceptors A0, A1, FX, FA and FB in turn. The protein is Photosystem I iron-sulfur center of Stigeoclonium helveticum (Green alga).